The sequence spans 140 residues: uncharacterized protein (140 aa).

Its subcellular location is the mitochondrion. This is an uncharacterized protein from Homo sapiens (Human).